We begin with the raw amino-acid sequence, 269 residues long: Shikimate dehydrogenase (NADP(+)) (269 aa).

Shikimate-binding positions include 17-19 (SKS) and Thr64. Lys68 functions as the Proton acceptor in the catalytic mechanism. Position 80 (Glu80) interacts with NADP(+). Shikimate is bound by residues Asn89 and Asp105. NADP(+) is bound by residues 130–134 (GAGGA), 154–159 (NRTHAK), and Met213. A shikimate-binding site is contributed by Tyr215. An NADP(+)-binding site is contributed by Gly237.

It belongs to the shikimate dehydrogenase family. As to quaternary structure, homodimer.

It carries out the reaction shikimate + NADP(+) = 3-dehydroshikimate + NADPH + H(+). It participates in metabolic intermediate biosynthesis; chorismate biosynthesis; chorismate from D-erythrose 4-phosphate and phosphoenolpyruvate: step 4/7. Involved in the biosynthesis of the chorismate, which leads to the biosynthesis of aromatic amino acids. Catalyzes the reversible NADPH linked reduction of 3-dehydroshikimate (DHSA) to yield shikimate (SA). The sequence is that of Shikimate dehydrogenase (NADP(+)) from Neisseria flavescens.